A 434-amino-acid polypeptide reads, in one-letter code: Sodium/bile acid cotransporter 5 (434 aa).

A signal peptide spans 1–18; it reads MSGNFFIFLLLLVTPGEA. The Extracellular segment spans residues 19–129; the sequence is KKSFLSFLNI…VRVFRQTDDS (111 aa). Residues Asn-73 and Asn-96 are each glycosylated (N-linked (GlcNAc...) asparagine). Residues 130–150 traverse the membrane as a helical segment; it reads LLQAPIHVDSSIFLLVLSMIL. Residues 151-172 are Cytoplasmic-facing; sequence LNKCAFGCKIEFQVLQTVWKRP. The chain crosses the membrane as a helical span at residues 173-193; that stretch reads LPILLGVVIQFFLMPFCGFLL. The Extracellular segment spans residues 194 to 203; that stretch reads SQILGLPKAQ. Residues 204-226 form a helical membrane-spanning segment; the sequence is AFGFVMTCTCPGGGGGYLFALLL. At 227 to 232 the chain is on the cytoplasmic side; that stretch reads EGDVTL. Residues 233 to 255 form a helical membrane-spanning segment; it reads AILMTCTSTSLALIMMPVNSYFY. Topologically, residues 256-268 are extracellular; it reads SRLLGLAGAFHVP. Residues 269–289 traverse the membrane as a helical segment; the sequence is VLKIVSTLLFILMPMSTGVII. The Cytoplasmic portion of the chain corresponds to 290–306; sequence KHKMPAKAICLERVVRP. Residues 307–327 form a helical membrane-spanning segment; that stretch reads LSLTLMFVGIYLAFRMGLVFL. Residues 328 to 331 are Extracellular-facing; the sequence is RMAN. A helical membrane pass occupies residues 332–352; that stretch reads LEVFLLGLLVPALGLLFGYSL. Residues 353–365 are Cytoplasmic-facing; the sequence is AKVYLLPLPVCKT. Residues 366-386 form a helical membrane-spanning segment; it reads VALETGMLNSFLALAIIQLSF. Over 387–395 the chain is Extracellular; the sequence is SQPKAHEAS. A helical transmembrane segment spans residues 396–416; sequence VAPFTVAMCSSCEMLLLLLVY. Residues 417–434 lie on the Cytoplasmic side of the membrane; sequence KAKRRPSLSTEYEKTPLV.

It belongs to the bile acid:sodium symporter (BASS) (TC 2.A.28) family.

The protein localises to the membrane. This Mus musculus (Mouse) protein is Sodium/bile acid cotransporter 5 (Slc10a5).